Consider the following 441-residue polypeptide: Xaa-Pro dipeptidase (441 aa).

Positions 244, 255, 336, 381, and 420 each coordinate Mn(2+).

It belongs to the peptidase M24B family. Bacterial-type prolidase subfamily. It depends on Mn(2+) as a cofactor.

The enzyme catalyses Xaa-L-Pro dipeptide + H2O = an L-alpha-amino acid + L-proline. Its function is as follows. Splits dipeptides with a prolyl residue in the C-terminal position. The polypeptide is Xaa-Pro dipeptidase (Xanthomonas campestris pv. campestris (strain B100)).